Consider the following 341-residue polypeptide: L-threonine 3-dehydrogenase (341 aa).

Residue Cys-38 participates in Zn(2+) binding. Residues Thr-40 and His-43 each act as charge relay system in the active site. Residues His-63, Glu-64, Cys-93, Cys-96, Cys-99, and Cys-107 each contribute to the Zn(2+) site. Residues Ile-175, Asp-195, Arg-200, 262–264 (LGI), and 286–287 (IY) each bind NAD(+).

This sequence belongs to the zinc-containing alcohol dehydrogenase family. In terms of assembly, homotetramer. Zn(2+) serves as cofactor.

The protein resides in the cytoplasm. It catalyses the reaction L-threonine + NAD(+) = (2S)-2-amino-3-oxobutanoate + NADH + H(+). The protein operates within amino-acid degradation; L-threonine degradation via oxydo-reductase pathway; glycine from L-threonine: step 1/2. Its function is as follows. Catalyzes the NAD(+)-dependent oxidation of L-threonine to 2-amino-3-ketobutyrate. This Enterobacter sp. (strain 638) protein is L-threonine 3-dehydrogenase.